We begin with the raw amino-acid sequence, 365 residues long: MKKTALYSWHEEAGAKIIDFGGYLMPVQYRGIIAEHHAVRSAAGLFDVSHMGNFYVRGARAKEFLQYMTTNDLDNAEDGQAQYNLMLYPHGGIVDDLIIYRIDSETFFLIVNASNAQKDFEWLQQHIAAFEGVVLEDHTDQLSLIALQGPLALNILATVFPALDVPALGAFRFCKVLFQGTEVMIAGTGYTGEKGVEICLPNAMALPLWEALFEAGKESGIQPIGLGARDTLRLEMGYSLYGHEIDQDTNPLEARLKWVVKMGKGHFMGKEACQQVEGNLKRGVAGFSLDGRVLPRQHFKLYNSDRQEIGWVCSGTLSPTLQEPVGTCNVVREYLKPGTPILVEVRGSLHTGVIRRLPFVTTSLS.

It belongs to the GcvT family. The glycine cleavage system is composed of four proteins: P, T, L and H.

It catalyses the reaction N(6)-[(R)-S(8)-aminomethyldihydrolipoyl]-L-lysyl-[protein] + (6S)-5,6,7,8-tetrahydrofolate = N(6)-[(R)-dihydrolipoyl]-L-lysyl-[protein] + (6R)-5,10-methylene-5,6,7,8-tetrahydrofolate + NH4(+). Its function is as follows. The glycine cleavage system catalyzes the degradation of glycine. The polypeptide is Aminomethyltransferase (Pelodictyon phaeoclathratiforme (strain DSM 5477 / BU-1)).